The chain runs to 363 residues: Chorismate synthase (363 aa).

Positions 48 and 54 each coordinate NADP(+). FMN is bound by residues arginine 125–serine 127, asparagine 237–alanine 238, glycine 277, lysine 292–serine 296, and arginine 318.

The protein belongs to the chorismate synthase family. Homotetramer. It depends on FMNH2 as a cofactor.

It carries out the reaction 5-O-(1-carboxyvinyl)-3-phosphoshikimate = chorismate + phosphate. Its pathway is metabolic intermediate biosynthesis; chorismate biosynthesis; chorismate from D-erythrose 4-phosphate and phosphoenolpyruvate: step 7/7. Functionally, catalyzes the anti-1,4-elimination of the C-3 phosphate and the C-6 proR hydrogen from 5-enolpyruvylshikimate-3-phosphate (EPSP) to yield chorismate, which is the branch point compound that serves as the starting substrate for the three terminal pathways of aromatic amino acid biosynthesis. This reaction introduces a second double bond into the aromatic ring system. The sequence is that of Chorismate synthase from Ectopseudomonas mendocina (strain ymp) (Pseudomonas mendocina).